The chain runs to 356 residues: SERTA domain-containing protein 4 (356 aa).

A disordered region spans residues 33 to 53 (SYGGPSPPGPAQAPLQGDRGA). The SERTA domain maps to 101–147 (IFEERAHILYMSLEKLKFIDDPEVYLRRSVLINNLMKRIHGEIIMQN). Residues 215–232 (TAASSPSASSSSSSSSSS) show a composition bias toward low complexity. 3 disordered regions span residues 215–238 (TAASSPSASSSSSSSSSSPPLPLP), 280–302 (KLNDEKANDDTNRDGGPLSHEPV), and 332–356 (WKKSLRKKEASPPSNKLCCSKGSKI). Residues 280-292 (KLNDEKANDDTNR) show a composition bias toward basic and acidic residues.

This chain is SERTA domain-containing protein 4 (SERTAD4), found in Homo sapiens (Human).